A 634-amino-acid polypeptide reads, in one-letter code: Probable potassium transport system protein Kup (634 aa).

A run of 12 helical transmembrane segments spans residues 21–41 (LVIGAIGVVFGDIGTSPLYTL), 58–78 (VLGILSLVFWALMLVVTLKYV), 110–130 (MYVVGILGIFGASLFFGDGVI), 147–167 (APKLEPFVVPITLVVLSMLFL), 179–199 (AFGPITLLWFFALGAIGVYNM), 223–243 (WHAVFVLGAVVLAVTGGEALY), 258–278 (WQFVVLPMLTLTYLGQGALVL), 296–316 (ALYPMIVLATAATVIASQALI), 348–368 (IYVPAVNWCLLALVAVAVIGF), 377–397 (AYGVSVTGTMLITTVLMIIYA), 403–423 (VPAPLLWLFALVFLAVDCAFF), and 427–447 (IIKFLDGAWFPLLLGLILFTL).

This sequence belongs to the HAK/KUP transporter (TC 2.A.72) family.

The protein localises to the cell inner membrane. It carries out the reaction K(+)(in) + H(+)(in) = K(+)(out) + H(+)(out). Its function is as follows. Transport of potassium into the cell. Likely operates as a K(+):H(+) symporter. This is Probable potassium transport system protein Kup from Xanthomonas axonopodis pv. citri (strain 306).